The following is a 571-amino-acid chain: Streptolysin O (571 aa).

A signal peptide spans 1 to 33 (MSNKKTFKKYSRVAGLLTAALIIGNLVTANAES). The interval 30-108 (NAESNKQNTA…KKSEEDHTEE (79 aa)) is disordered. Over residues 37–48 (NTASTETTTTNE) the composition is skewed to low complexity. 2 stretches are compositionally biased toward basic and acidic residues: residues 50–68 (PKPE…KTDD) and 79–108 (APKE…HTEE). A run of 4 beta stranded transmembrane segments spans residues 260-273 (KSQI…NSKI), 280-289 (IDFKSISKGE), 358-367 (SNDVEAAFSA), and 375-387 (KTNG…LENS). The short motif at 529–539 (ECTGLAWEWWR) is the Conserved undecapeptide element. Positions 561 to 562 (TL) match the Cholesterol binding motif.

This sequence belongs to the cholesterol-dependent cytolysin family. In terms of assembly, homooligomeric pore complex of 35 to 50 subunits; when inserted in the host membrane.

It localises to the secreted. The protein resides in the host cell membrane. Functionally, a cholesterol-dependent toxin that causes cytolysis by forming pores in cholesterol containing host membranes. After binding to target membranes, the protein undergoes a major conformation change, leading to its insertion in the host membrane and formation of an oligomeric pore complex. Cholesterol is required for binding to host membranes, membrane insertion and pore formation; cholesterol binding is mediated by a Thr-Leu pair in the C-terminus. Can be reversibly inactivated by oxidation. The protein is Streptolysin O (slo) of Streptococcus pyogenes serotype M18 (strain MGAS8232).